The following is a 490-amino-acid chain: Dipeptide and tripeptide permease A (490 aa).

The Cytoplasmic portion of the chain corresponds to 1–34; sequence MSNANNNQPENVSLNAFKQPRAFYLIFSIELWER. The helical transmembrane segment at 35 to 55 threads the bilayer; that stretch reads FGYYGLQGIMAVYLVKMLGMT. Over 56–59 the chain is Periplasmic; sequence EADS. Residues 60–80 traverse the membrane as a helical segment; it reads ITLFSSFSALVYGFVAIGGWL. Residues 81–89 lie on the Cytoplasmic side of the membrane; it reads GDKVLGAKR. The chain crosses the membrane as a helical span at residues 90–110; it reads VIMLGALVLAIGYAFVAYSGH. Position 111 (Asp-111) is a topological domain, periplasmic. Residues 112–132 form a helical membrane-spanning segment; sequence LSLVYVGMATIAVGNGLFKAN. Residues 133–153 are Cytoplasmic-facing; it reads PSSLLSTCYEKNDPRLDGAFT. The chain crosses the membrane as a helical span at residues 154-174; that stretch reads MYYMSVNIGSFFSMLATPWLA. Over 175 to 176 the chain is Periplasmic; sequence AR. The chain crosses the membrane as a helical span at residues 177–197; the sequence is FGWSVAFSLSVVGMLITLVNF. Topologically, residues 198–217 are cytoplasmic; sequence MMCRRWVKDQGSKPDFAPLQ. A helical membrane pass occupies residues 218–238; sequence VGKLMMTLVGVVILVAISTWL. The Periplasmic segment spans residues 239–246; it reads LHNQTIAR. A helical membrane pass occupies residues 247 to 267; sequence WALAIISAGIILIFAKETFAL. Residues 268–274 are Cytoplasmic-facing; the sequence is QGGARRK. Residues 275 to 295 traverse the membrane as a helical segment; sequence MIVAFLLMLEAVVFFVLYSQM. Residues 296–320 are Periplasmic-facing; the sequence is PTSLNFFAIHNVEHSIFGIAFEPEQ. A helical transmembrane segment spans residues 321-341; it reads YQALNPFWIMVASPILAAIYN. Residues 342–352 lie on the Cytoplasmic side of the membrane; sequence KMGDRLPMPHK. Residues 353–373 form a helical membrane-spanning segment; the sequence is FAIGMVLCSGAFLVLPWGASF. At 374-383 the chain is on the periplasmic side; sequence ANEAGIVSVN. Residues 384-404 form a helical membrane-spanning segment; it reads WLILSYALQSIGELMISGLGL. Residues 405–414 are Cytoplasmic-facing; that stretch reads AMVAQLVPQR. A helical transmembrane segment spans residues 415–435; sequence LMGFIMGSWFLTTAAAALIAG. The Periplasmic portion of the chain corresponds to 436-460; it reads KVAALTAVPGGEVADPHASLAIYSH. Residues 461–481 form a helical membrane-spanning segment; sequence VFMQIGLATAVIAVLMLLTAP. At 482-490 the chain is on the cytoplasmic side; sequence KLNRMTLGD.

Belongs to the major facilitator superfamily. Proton-dependent oligopeptide transporter (POT/PTR) (TC 2.A.17) family. DtpA subfamily.

It localises to the cell inner membrane. Proton-dependent permease that transports di- and tripeptides. The chain is Dipeptide and tripeptide permease A from Edwardsiella piscicida.